A 507-amino-acid chain; its full sequence is Interleukin-17 receptor E-like protein (507 aa).

Residues 1 to 21 (MLAGQALAFLGLTWGTFQSLA) form the signal peptide.

It localises to the secreted. The sequence is that of Interleukin-17 receptor E-like protein from Homo sapiens (Human).